Consider the following 550-residue polypeptide: MELLAASRACIFFGLVTVLDAWGVQQVELSEGAWAMIDGRDVLTPTNTTTRVTKAWTFLETPPGCAGDISVKKVCVSHSLCEDNIIIGKHCNLLTGEHGIALAEFNVVNGSLRRTDDVYFVNGTVFPILAETRSVLQIHRATPSIAGVYTLHVSIDGMMKHSVVLLTVKKPPKQPQPRLRVKTPPPVTVPQVPVKTHTDFVVHGYHSRVYADGESFELSVNLESHIVEPSFSAEIQWYYMNTSSSSCDLFRVFETCIFHPTAMACLHPEQHTCSFTSPIRATKILHRVYGNCSDHGNSWPSRCHSTLLGNRLYFIQPAQNRVDLLFKDTPASATGLYVFVLLYNGHPEAWTYTLLSTANHFMNVLTDVTRPRLGEHFYTDLGHKIITPHPSVATTEELGAWTRHYLAFLLVIICTCAALLVALVVWGCILYIRSNRKPYEVLNPFETVYTSVPSNDPSDEVLVFERLASDSDDSFDSDSDEELEYPPPPKPAPQLPPYQFVDGGDAPSGRSGFKVWFRDTPEASPVPLHKPTLQGPDYSRVASKLKSILK.

The signal sequence occupies residues 1-23; that stretch reads MELLAASRACIFFGLVTVLDAWG. At 24 to 408 the chain is on the virion surface side; it reads VQQVELSEGA…GAWTRHYLAF (385 aa). A glycan (N-linked (GlcNAc...) asparagine; by host) is linked at Asn-47. The segment at 65-91 is interaction with gI; the sequence is CAGDISVKKVCVSHSLCEDNIIIGKHC. Residues Asn-109, Asn-122, and Asn-241 are each glycosylated (N-linked (GlcNAc...) asparagine; by host). 2 disulfides stabilise this stretch: Cys-247/Cys-273 and Cys-256/Cys-265. N-linked (GlcNAc...) asparagine; by host glycosylation occurs at Asn-291. The cysteines at positions 292 and 303 are disulfide-linked. Residues 409 to 425 form a helical membrane-spanning segment; that stretch reads LLVIICTCAALLVALVV. At 426–550 the chain is on the intravirion side; it reads WGCILYIRSN…VASKLKSILK (125 aa). The short motif at 449–452 is the Internalization motif element; that stretch reads YTSV. An acidic region spans residues 468–482; it reads ASDSDDSFDSDSDEE. The span at 471–484 shows a compositional bias: acidic residues; sequence SDDSFDSDSDEELE. The tract at residues 471-513 is disordered; it reads SDDSFDSDSDEELEYPPPPKPAPQLPPYQFVDGGDAPSGRSGF. The segment covering 485–496 has biased composition (pro residues); it reads YPPPPKPAPQLP.

The protein belongs to the alphaherpesvirinae glycoprotein E family. As to quaternary structure, interacts with gI. Phosphorylated on serines within the acidic cluster. Phosphorylation determines whether endocytosed viral gE traffics to the trans-Golgi network or recycles to the cell membrane.

The protein localises to the virion membrane. It is found in the host cell membrane. Its subcellular location is the host cell junction. The protein resides in the host Golgi apparatus membrane. It localises to the host endosome membrane. Functionally, in epithelial cells, the heterodimer gE/gI is required for the cell-to-cell spread of the virus, by sorting nascent virions to cell junctions. Once the virus reaches the cell junctions, virus particles can spread to adjacent cells extremely rapidly through interactions with cellular receptors that accumulate at these junctions. Implicated in basolateral spread in polarized cells. In neuronal cells, gE/gI is essential for the anterograde spread of the infection throughout the host nervous system. Together with US9, the heterodimer gE/gI is involved in the sorting and transport of viral structural components toward axon tips. The polypeptide is Envelope glycoprotein E (gE) (Equus caballus (Horse)).